The chain runs to 134 residues: ATP synthase epsilon chain (134 aa).

It belongs to the ATPase epsilon chain family. In terms of assembly, F-type ATPases have 2 components, CF(1) - the catalytic core - and CF(0) - the membrane proton channel. CF(1) has five subunits: alpha(3), beta(3), gamma(1), delta(1), epsilon(1). CF(0) has three main subunits: a, b and c.

Its subcellular location is the cell membrane. In terms of biological role, produces ATP from ADP in the presence of a proton gradient across the membrane. The chain is ATP synthase epsilon chain from Pelotomaculum thermopropionicum (strain DSM 13744 / JCM 10971 / SI).